Consider the following 307-residue polypeptide: MEASRWWLLVTVLMAGAHCVALVDQEASDLIHSGPQDSSPGPALPCHKISVSNIDFAFKLYRQLALNAPGENILFFPVSISLALAMLSWGAPVASRTQLLEGLGFTLTVVPEEEIQEGFWDLLIRLRGQGPRLLLTMDQRRFSGLGARANQSLEEAQKHIDEYTEQQTQGKLGAWEKDLGSETTAVLVNHMLLRAEWMKPFDSHATSPKEFFVDEHSAVWVPMMKEKASHRFLHDRELQCSVLRMDHAGNTTTFFIFPNRGKMRHLEDALLPETLIKWDSLLRTRELDFHFPKFSISRTCRLEMLLP.

Positions 1 to 21 are cleaved as a signal peptide; that stretch reads MEASRWWLLVTVLMAGAHCVA. Asparagine 150 and asparagine 250 each carry an N-linked (GlcNAc...) asparagine glycan.

It belongs to the serpin family.

Its subcellular location is the secreted. The sequence is that of Putative serpin A13 (SERPINA13P) from Homo sapiens (Human).